We begin with the raw amino-acid sequence, 629 residues long: tRNA uridine 5-carboxymethylaminomethyl modification enzyme MnmG (629 aa).

FAD is bound at residue 13-18; sequence GGGHAG. Position 273–287 (273–287) interacts with NAD(+); it reads GPRYCPSIEDKIHRF.

It belongs to the MnmG family. Homodimer. Heterotetramer of two MnmE and two MnmG subunits. FAD is required as a cofactor.

It is found in the cytoplasm. In terms of biological role, NAD-binding protein involved in the addition of a carboxymethylaminomethyl (cmnm) group at the wobble position (U34) of certain tRNAs, forming tRNA-cmnm(5)s(2)U34. In Shewanella baltica (strain OS185), this protein is tRNA uridine 5-carboxymethylaminomethyl modification enzyme MnmG.